Consider the following 360-residue polypeptide: DNA replication and repair protein RecF (360 aa).

30–37 contacts ATP; it reads GHNGSGKT.

The protein belongs to the RecF family.

Its subcellular location is the cytoplasm. In terms of biological role, the RecF protein is involved in DNA metabolism; it is required for DNA replication and normal SOS inducibility. RecF binds preferentially to single-stranded, linear DNA. It also seems to bind ATP. This is DNA replication and repair protein RecF from Shewanella sediminis (strain HAW-EB3).